The chain runs to 448 residues: Glutamyl-tRNA reductase 2 (448 aa).

Substrate-binding positions include 50-53, S109, 114-116, and Q120; these read TCER and ESD. The Nucleophile role is filled by C51. 190 to 195 serves as a coordination point for NADP(+); it reads GTGQVA. Residues 423–448 are disordered; sequence DQAVPAYSPQPIGNTSNAAASATPRR. Residues 433-442 are compositionally biased toward polar residues; that stretch reads PIGNTSNAAA.

This sequence belongs to the glutamyl-tRNA reductase family. In terms of assembly, homodimer.

The catalysed reaction is (S)-4-amino-5-oxopentanoate + tRNA(Glu) + NADP(+) = L-glutamyl-tRNA(Glu) + NADPH + H(+). Its pathway is porphyrin-containing compound metabolism; protoporphyrin-IX biosynthesis; 5-aminolevulinate from L-glutamyl-tRNA(Glu): step 1/2. Its function is as follows. Catalyzes the NADPH-dependent reduction of glutamyl-tRNA(Glu) to glutamate 1-semialdehyde (GSA). The protein is Glutamyl-tRNA reductase 2 of Nocardioides sp. (strain ATCC BAA-499 / JS614).